Reading from the N-terminus, the 288-residue chain is Ras-like protein 1 (288 aa).

11 to 18 (GGGGVGKS) is a GTP binding site. Residues 33–41 (YDPTIEDSY) carry the Effector region motif. GTP-binding positions include 58–62 (DTAGQ) and 117–120 (NKCD). The tract at residues 176–288 (EKQQQQQQQQ…KSKNGCCVIV (113 aa)) is disordered. 2 stretches are compositionally biased toward low complexity: residues 178–216 (QQQQQQQQQNANQQGQDQYGQQKDNQQSQFNNQINNNNN) and 246–281 (PNQSQSQRQQQQQQQEPQQQSENQFSGQKQSSSKSK). The S-palmitoyl cysteine moiety is linked to residue Cys284. At Cys285 the chain carries Cysteine methyl ester. Cys285 carries S-farnesyl cysteine lipidation. The propeptide at 286–288 (VIV) is removed in mature form.

It belongs to the small GTPase superfamily. Ras family.

It localises to the cell membrane. It catalyses the reaction GTP + H2O = GDP + phosphate + H(+). Its activity is regulated as follows. Alternates between an inactive form bound to GDP and an active form bound to GTP. Activated by a guanine nucleotide-exchange factor (GEF) and inactivated by a GTPase-activating protein (GAP). Functionally, required for the regulation of both a MAP kinase signaling pathway and a cAMP signaling pathway. The activation of these pathways contributes to the pathogenicity of the cells through the induction of the morphological transition from the yeast to the polarized filamentous form. This is Ras-like protein 1 (RAS1) from Candida albicans (strain WO-1) (Yeast).